The primary structure comprises 60 residues: Large ribosomal subunit protein uL30 (60 aa).

It belongs to the universal ribosomal protein uL30 family. As to quaternary structure, part of the 50S ribosomal subunit.

In Acidothermus cellulolyticus (strain ATCC 43068 / DSM 8971 / 11B), this protein is Large ribosomal subunit protein uL30.